The following is a 172-amino-acid chain: WW domain binding protein VOPP1 (172 aa).

Residues 1 to 22 (MRRQPAKVAALLLGLLLECTEA) form the signal peptide. The Extracellular segment spans residues 23–60 (KKHCWYFEGLYPTYYICRSYEDCCGSRCCVRALSIQRL). The chain crosses the membrane as a helical span at residues 61-81 (WYFWFLLMMGVLFCCGAGFFI). The Cytoplasmic segment spans residues 82 to 172 (RRRMYPPPLI…PPYEQVVKAK (91 aa)). The interval 102 to 153 (RQPPNPGPGAQQPGPPYYTDPGGPGMNPVGNSMAMAFQVPPNSPQGSVACPP) is disordered. Over residues 104-119 (PPNPGPGAQQPGPPYY) the composition is skewed to pro residues.

The protein belongs to the VOPP1/ECOP family. Interacts with WWOX (via WW domain). Widely expressed with highest levels in thymus and ovary.

The protein localises to the cytoplasmic vesicle membrane. It is found in the late endosome membrane. The protein resides in the lysosome membrane. In terms of biological role, increases the transcriptional activity of NFKB1 by facilitating its nuclear translocation, DNA-binding and associated apoptotic response, when overexpressed. May sequester WWOX in lysosomal vesicles and thereby regulate WWOX role as tumor suppressor. This is WW domain binding protein VOPP1 from Homo sapiens (Human).